We begin with the raw amino-acid sequence, 224 residues long: LRP chaperone MESD (224 aa).

A signal peptide spans 1-29 (MAASRWLRAVLLFLCASDLLLLPPPNAYA). The chaperone domain stretch occupies residues 1-155 (MAASRWLRAV…DRAIFMLRDG (155 aa)). 2 disordered regions span residues 28–49 (YAAD…IRDY) and 178–224 (GQMY…REDL). The interval 156-195 (SYAWEIKDFLVSQDRCAEVTLEGQMYPGKGGGSKEKNKTK) is escort domain. Over residues 187 to 224 (GSKEKNKTKPEKAKKKEGDPKPRASKEDNRAGSRREDL) the composition is skewed to basic and acidic residues. Residue asparagine 192 is glycosylated (N-linked (GlcNAc...) asparagine). The Prevents secretion from ER signature appears at 221–224 (REDL).

It belongs to the MESD family. Monomer. Interacts with LRP5; the interaction prevents LRP5 from forming aggregates and chaperones LRP6 to the plasma membrane. Interacts with LRP6; the interaction prevents LRP6 from forming aggregates and chaperones LRP6 to the plasma membrane. Interacts with LRP4; the interaction promotes glycosylation of LRP4 and its cell-surface expression. In terms of tissue distribution, expressed in many tissues, but not in skeletal muscles. In the retina expressed in retinal ganglion cells, inner and outer plexiform layers, photoreceptor inner and outer segments and retinal pigment epithelium (at protein level).

The protein resides in the endoplasmic reticulum. Its function is as follows. Chaperone specifically assisting the folding of beta-propeller/EGF modules within the family of low-density lipoprotein receptors (LDLRs). Acts as a modulator of the Wnt pathway through chaperoning the coreceptors of the canonical Wnt pathway, LRP5 and LRP6, to the plasma membrane. Essential for specification of embryonic polarity and mesoderm induction. Plays an essential role in neuromuscular junction (NMJ) formation by promoting cell-surface expression of LRP4. May regulate phagocytosis of apoptotic retinal pigment epithelium (RPE) cells. This chain is LRP chaperone MESD, found in Mus musculus (Mouse).